The primary structure comprises 247 residues: MSPNPTSDLSAIEQLQKEKILNPAARGQVTQDLSENIILTTVDDLHNWARLSSLWPLLYGTACCFIEFAALIGSRFDFDRFGLVPRSSPRQADLIITAGTITMKMAPALVRLYEEMPDPKYVIAMGACTITGGMFSSDSTTAVRGVDKLIPVDVYIPGCPPRPEAIFDAIIKLRKKVSNETIQERSTVMEQTHRYYSTPHNMKAVSPILTGKYLATPTRQAPPKELTEAIGMEVPPALASQKQKEEA.

[4Fe-4S] cluster contacts are provided by cysteine 63, cysteine 64, cysteine 128, and cysteine 159. Positions 218–247 (TRQAPPKELTEAIGMEVPPALASQKQKEEA) are disordered.

The protein belongs to the complex I 20 kDa subunit family. In terms of assembly, NDH-1 can be composed of about 15 different subunits; different subcomplexes with different compositions have been identified which probably have different functions. The cofactor is [4Fe-4S] cluster.

Its subcellular location is the cellular thylakoid membrane. The catalysed reaction is a plastoquinone + NADH + (n+1) H(+)(in) = a plastoquinol + NAD(+) + n H(+)(out). It carries out the reaction a plastoquinone + NADPH + (n+1) H(+)(in) = a plastoquinol + NADP(+) + n H(+)(out). Functionally, NDH-1 shuttles electrons from an unknown electron donor, via FMN and iron-sulfur (Fe-S) centers, to quinones in the respiratory and/or the photosynthetic chain. The immediate electron acceptor for the enzyme in this species is believed to be plastoquinone. Couples the redox reaction to proton translocation, and thus conserves the redox energy in a proton gradient. Cyanobacterial NDH-1 also plays a role in inorganic carbon-concentration. The sequence is that of NAD(P)H-quinone oxidoreductase subunit K from Crocosphaera subtropica (strain ATCC 51142 / BH68) (Cyanothece sp. (strain ATCC 51142)).